The chain runs to 393 residues: NAD(P)H-quinone oxidoreductase subunit H, chloroplastic (393 aa).

It belongs to the complex I 49 kDa subunit family. In terms of assembly, NDH is composed of at least 16 different subunits, 5 of which are encoded in the nucleus.

The protein localises to the plastid. It localises to the chloroplast thylakoid membrane. The catalysed reaction is a plastoquinone + NADH + (n+1) H(+)(in) = a plastoquinol + NAD(+) + n H(+)(out). The enzyme catalyses a plastoquinone + NADPH + (n+1) H(+)(in) = a plastoquinol + NADP(+) + n H(+)(out). Functionally, NDH shuttles electrons from NAD(P)H:plastoquinone, via FMN and iron-sulfur (Fe-S) centers, to quinones in the photosynthetic chain and possibly in a chloroplast respiratory chain. The immediate electron acceptor for the enzyme in this species is believed to be plastoquinone. Couples the redox reaction to proton translocation, and thus conserves the redox energy in a proton gradient. The sequence is that of NAD(P)H-quinone oxidoreductase subunit H, chloroplastic from Drimys granadensis.